Consider the following 351-residue polypeptide: uncharacterized protein (351 aa).

Residues 25–67 form a disordered region; it reads KKAETETLPPANSQPAAPAPEAKPTEAPVAKAEAKPETPAQPV. The span at 33–55 shows a compositional bias: low complexity; that stretch reads PPANSQPAAPAPEAKPTEAPVAK.

This is an uncharacterized protein from Escherichia coli (strain K12).